Consider the following 365-residue polypeptide: Putative fatty acid elongase 2 (365 aa).

The Lumenal segment spans residues 1 to 68; the sequence is MPDSPTLHHN…SFEFIVNKTR (68 aa). N17 and N65 each carry an N-linked (GlcNAc...) asparagine glycan. Residues 69 to 89 traverse the membrane as a helical segment; that stretch reads FSSAPVVATIIISYYLLILVG. Residues 90–111 lie on the Cytoplasmic side of the membrane; it reads GRIMRNRQPIRLQKIFQYYNLT. A helical membrane pass occupies residues 112–132; the sequence is FSIASAILALLIFEQVAPAIY. Residues 133–149 are Lumenal-facing; it reads KHGFFFSICNEKAWTQP. The chain crosses the membrane as a helical span at residues 150–170; sequence LVFLYYCAYISKFLELTDTFF. Topologically, residues 171 to 179 are cytoplasmic; sequence LVLRKKPLQ. A helical transmembrane segment spans residues 180 to 198; it reads FLHCYHHGATAVLVYTQIV. Over 199–204 the chain is Lumenal; the sequence is GRTSIS. A helical transmembrane segment spans residues 205-225; that stretch reads WLIIEINLLVHVTMYYYYYLV. The Cytoplasmic portion of the chain corresponds to 226–241; it reads AKGIRVPWKKWVTRFQ. Residues 242–262 traverse the membrane as a helical segment; the sequence is IVQFFADLGFIYFAVYTEVAY. Topologically, residues 263–278 are lumenal; that stretch reads RLKFYKACMGHCSGHP. A helical membrane pass occupies residues 279–299; it reads LAAFCGLATISSYLVLFIVFY. Residues 300 to 365 lie on the Cytoplasmic side of the membrane; the sequence is HNTYKKNAAL…PISSGLNNEK (66 aa).

This sequence belongs to the ELO family.

It is found in the endoplasmic reticulum membrane. The enzyme catalyses a very-long-chain acyl-CoA + malonyl-CoA + H(+) = a very-long-chain 3-oxoacyl-CoA + CO2 + CoA. Functionally, may be involved in the synthesis of very long chain fatty acids. The polypeptide is Putative fatty acid elongase 2 (Schizosaccharomyces pombe (strain 972 / ATCC 24843) (Fission yeast)).